A 323-amino-acid polypeptide reads, in one-letter code: Serine/threonine-protein phosphatase PP1 (323 aa).

D63, H65, D91, and N123 together coordinate Mn(2+). Catalysis depends on H124, which acts as the Proton donor. H172 and H247 together coordinate Mn(2+).

Belongs to the PPP phosphatase family. PP-1 subfamily. Requires Mn(2+) as cofactor.

It carries out the reaction O-phospho-L-seryl-[protein] + H2O = L-seryl-[protein] + phosphate. It catalyses the reaction O-phospho-L-threonyl-[protein] + H2O = L-threonyl-[protein] + phosphate. Its function is as follows. Plays an important role in the control of mitosis by reversing the action of the nimA kinase. This is Serine/threonine-protein phosphatase PP1 (bimG) from Emericella nidulans (strain FGSC A4 / ATCC 38163 / CBS 112.46 / NRRL 194 / M139) (Aspergillus nidulans).